Here is a 433-residue protein sequence, read N- to C-terminus: Ascus wall endo-1,3-alpha-glucanase (433 aa).

It belongs to the glycosyl hydrolase 71 family.

The protein resides in the ascus epiplasm. The enzyme catalyses Endohydrolysis of (1-&gt;3)-alpha-D-glucosidic linkages in isolichenin, pseudonigeran and nigeran.. In terms of biological role, promotes the release of ascospores from asci by hydrolyzing 1,3-alpha-glucan in the ascus wall. The protein is Ascus wall endo-1,3-alpha-glucanase of Schizosaccharomyces pombe (strain 972 / ATCC 24843) (Fission yeast).